Consider the following 130-residue polypeptide: Small ribosomal subunit protein uS9 (130 aa).

Belongs to the universal ribosomal protein uS9 family.

This Colwellia psychrerythraea (strain 34H / ATCC BAA-681) (Vibrio psychroerythus) protein is Small ribosomal subunit protein uS9.